A 105-amino-acid polypeptide reads, in one-letter code: Cyclotide vibi-J (105 aa).

A signal peptide spans 1-9 (AAFALPALA). Positions 10–71 (TSFEKDFITH…KSSNSINALG (62 aa)) are excised as a propeptide. The segment at residues 72–102 (GTFPCGESCVWIPCISKVIGCACKSKVCYKN) is a cross-link (cyclopeptide (Gly-Asn)). Cystine bridges form between cysteine 76/cysteine 92, cysteine 80/cysteine 94, and cysteine 85/cysteine 99. Residues 103–105 (SLA) constitute a propeptide that is removed on maturation.

Post-translationally, this is a cyclic peptide.

Functionally, probably participates in a plant defense mechanism. This Viola biflora (Yellow wood violet) protein is Cyclotide vibi-J.